The chain runs to 455 residues: N(6)-adenosine-methyltransferase non-catalytic subunit METTL14 (455 aa).

A disordered region spans residues 21-96 (QQLGAESPDS…QHQEESGPYE (76 aa)). The span at 37-51 (SKDEQKEIEETRETC) shows a compositional bias: basic and acidic residues. Residues 69 to 82 (EGEDPEEDVEEQKE) show a composition bias toward acidic residues. 2 interaction with METTL3 regions span residues 134-135 (RD) and 236-237 (SG). The tract at residues 244–253 (RMCLRKWGFR) is positively charged region required for RNA-binding. 2 interaction with METTL3 regions span residues 254 to 257 (RCED) and 277 to 286 (KAVFQRTKEH). Residues 296 to 297 (RR) form a positively charged region required for RNA-binding region. An interaction with METTL3 region spans residues 307 to 311 (NVDID). The tract at residues 392-455 (ERLRPKSPPP…GGPHRGFPPR (64 aa)) is disordered. Residues 407-421 (RGGGAPRGGRGGPAA) show a composition bias toward gly residues. Basic and acidic residues predominate over residues 423 to 441 (RGDRGRERNRPNFRGDRGG).

This sequence belongs to the MT-A70-like family. As to quaternary structure, heterodimer; heterodimerizes with mettl3 to form an antiparallel heterodimer that constitutes an active methyltransferase. Component of the WMM complex, a N6-methyltransferase complex composed of a catalytic subcomplex, named MAC, and of an associated subcomplex, named MACOM. The MAC subcomplex is composed of mettl3 and mettl14.

Its subcellular location is the nucleus. Functionally, the METTL3-METTL14 heterodimer forms a N6-methyltransferase complex that methylates adenosine residues at the N(6) position of some mRNAs and regulates the circadian clock, differentiation of embryonic stem cells and cortical neurogenesis. In the heterodimer formed with mettl3, mettl14 constitutes the RNA-binding scaffold that recognizes the substrate rather than the catalytic core. N6-methyladenosine (m6A), which takes place at the 5'-[AG]GAC-3' consensus sites of some mRNAs, plays a role in mRNA stability and processing. This is N(6)-adenosine-methyltransferase non-catalytic subunit METTL14 (mettl14) from Danio rerio (Zebrafish).